We begin with the raw amino-acid sequence, 216 residues long: Flagellin B3 (216 aa).

The propeptide occupies 1–11 (MLLDYIKSRRG).

This sequence belongs to the archaeal flagellin family.

Its subcellular location is the archaeal flagellum. Its function is as follows. Flagellin is the subunit protein which polymerizes to form the filaments of archaeal flagella. The protein is Flagellin B3 (flaB3) of Methanocaldococcus jannaschii (strain ATCC 43067 / DSM 2661 / JAL-1 / JCM 10045 / NBRC 100440) (Methanococcus jannaschii).